The following is a 421-amino-acid chain: Serine--tRNA ligase (421 aa).

Residue 230-232 (TAE) participates in L-serine binding. An ATP-binding site is contributed by 261–263 (RRE). An L-serine-binding site is contributed by Glu284. 348–351 (EISS) lines the ATP pocket. Ser383 is an L-serine binding site.

Belongs to the class-II aminoacyl-tRNA synthetase family. Type-1 seryl-tRNA synthetase subfamily. As to quaternary structure, homodimer. The tRNA molecule binds across the dimer.

Its subcellular location is the cytoplasm. The catalysed reaction is tRNA(Ser) + L-serine + ATP = L-seryl-tRNA(Ser) + AMP + diphosphate + H(+). The enzyme catalyses tRNA(Sec) + L-serine + ATP = L-seryl-tRNA(Sec) + AMP + diphosphate + H(+). Its pathway is aminoacyl-tRNA biosynthesis; selenocysteinyl-tRNA(Sec) biosynthesis; L-seryl-tRNA(Sec) from L-serine and tRNA(Sec): step 1/1. In terms of biological role, catalyzes the attachment of serine to tRNA(Ser). Is also able to aminoacylate tRNA(Sec) with serine, to form the misacylated tRNA L-seryl-tRNA(Sec), which will be further converted into selenocysteinyl-tRNA(Sec). The protein is Serine--tRNA ligase of Finegoldia magna (strain ATCC 29328 / DSM 20472 / WAL 2508) (Peptostreptococcus magnus).